The sequence spans 170 residues: MSKKIGLFYGTQTGKTESVAEIIRDEFGNDVVTLHDVSQAEVTDLNDYQYLIIGCPTWNIGELQSDWEGLYSELDDVDFNGKLVAYFGTGDQIGYADNFQDAIGILEEKISQRGGKTVGYWSTDGYDFNDSKALRNGKFVGLALDEDNQSDLTDDRIKSWVAQLKSEFGL.

The 161-residue stretch at 5 to 165 folds into the Flavodoxin-like domain; the sequence is IGLFYGTQTG…RIKSWVAQLK (161 aa).

The protein belongs to the flavodoxin family. Requires FMN as cofactor.

Its function is as follows. Low-potential electron donor to a number of redox enzymes. The protein is Flavodoxin (isiB) of Nostoc sp. (strain PCC 7120 / SAG 25.82 / UTEX 2576).